Reading from the N-terminus, the 141-residue chain is Hemoglobin subunit alpha (141 aa).

Residues 1–141 (VLSDNDKTNV…VSTVLTSKYR (141 aa)) enclose the Globin domain. Serine 3 is subject to Phosphoserine. Lysine 7 carries the N6-succinyllysine modification. Phosphothreonine is present on threonine 8. An N6-succinyllysine modification is found at lysine 11. Lysine 16 carries the N6-acetyllysine; alternate modification. Lysine 16 is subject to N6-succinyllysine; alternate. Residue tyrosine 24 is modified to Phosphotyrosine. Serine 35 is modified (phosphoserine). Position 40 is an N6-succinyllysine (lysine 40). Histidine 58 contacts O2. A heme b-binding site is contributed by histidine 87. Position 102 is a phosphoserine (serine 102). Phosphothreonine is present on threonine 108. At serine 124 the chain carries Phosphoserine. Residues threonine 134 and threonine 137 each carry the phosphothreonine modification. Position 138 is a phosphoserine (serine 138).

The protein belongs to the globin family. Heterotetramer of two alpha chains and two beta chains. In terms of tissue distribution, red blood cells.

Functionally, involved in oxygen transport from the lung to the various peripheral tissues. In terms of biological role, hemopressin acts as an antagonist peptide of the cannabinoid receptor CNR1. Hemopressin-binding efficiently blocks cannabinoid receptor CNR1 and subsequent signaling. This is Hemoglobin subunit alpha (HBA) from Loxodonta africana (African elephant).